Here is a 456-residue protein sequence, read N- to C-terminus: MDADLNKLWEKTLNIVKSEMSEVSFNTWIKSCEPISISDTSIKISVPNSFTKDILDKRYKSLVANSIEAVCSKLYEIKFIIESDLNNEDELNNSDNSDKNRDKNSRRNIVVNDEMSSTLNPKYTFNSFVIGNSNRFAHAASLAVAEAPAKAYNPLFIYGGVGLGKTHLMHAIGHYILQNNTKAKVVYVSSEKFTNELINAIKDDKNEEFRKKYRNVDVLLIDDIQFIAGKERTQEEFFHTFNELHDANKQIILSSDRPPKEIPTLEDRLRSRFEWGLIADIQVPDFETRMAILKKKADVENLKVANEVMGYIATKIKSNIRELEGALIRIIAYSSLTNREVTVDLASEALKDIISKKQGKHVTIPSIQEIVANYFNLKIDDLKSQRRTRNVAYPRQIAMYLSRKLTDMSLPKIGEEFGGRDHTTVIHAYEKISENLKSDESLQHTVSDITKKVSQN.

Residues Met1–Leu85 form a domain I, interacts with DnaA modulators region. Residues Leu85–Ser117 are domain II. The interval Thr118–Ser334 is domain III, AAA+ region. ATP contacts are provided by Gly162, Gly164, Lys165, and Thr166. Residues Ser335–Asn456 are domain IV, binds dsDNA.

Belongs to the DnaA family. In terms of assembly, oligomerizes as a right-handed, spiral filament on DNA at oriC.

The protein localises to the cytoplasm. Plays an essential role in the initiation and regulation of chromosomal replication. ATP-DnaA binds to the origin of replication (oriC) to initiate formation of the DNA replication initiation complex once per cell cycle. Binds the DnaA box (a 9 base pair repeat at the origin) and separates the double-stranded (ds)DNA. Forms a right-handed helical filament on oriC DNA; dsDNA binds to the exterior of the filament while single-stranded (ss)DNA is stabiized in the filament's interior. The ATP-DnaA-oriC complex binds and stabilizes one strand of the AT-rich DNA unwinding element (DUE), permitting loading of DNA polymerase. After initiation quickly degrades to an ADP-DnaA complex that is not apt for DNA replication. Binds acidic phospholipids. The protein is Chromosomal replication initiator protein DnaA of Clostridium botulinum (strain Eklund 17B / Type B).